Reading from the N-terminus, the 89-residue chain is Small ribosomal subunit protein uS15 (89 aa).

Basic and acidic residues predominate over residues 1-11; sequence MSIAAERKAEV. The disordered stretch occupies residues 1-25; it reads MSIAAERKAEVIKTSANKPGDTGSP.

The protein belongs to the universal ribosomal protein uS15 family. As to quaternary structure, part of the 30S ribosomal subunit. Forms a bridge to the 50S subunit in the 70S ribosome, contacting the 23S rRNA.

One of the primary rRNA binding proteins, it binds directly to 16S rRNA where it helps nucleate assembly of the platform of the 30S subunit by binding and bridging several RNA helices of the 16S rRNA. Its function is as follows. Forms an intersubunit bridge (bridge B4) with the 23S rRNA of the 50S subunit in the ribosome. The polypeptide is Small ribosomal subunit protein uS15 (Nitrobacter winogradskyi (strain ATCC 25391 / DSM 10237 / CIP 104748 / NCIMB 11846 / Nb-255)).